The sequence spans 1347 residues: MENLPFPLKLLSASSLNAPSSTPWVLDIFLTLVFALGFFFLLLPYLSYFRCDDPPSPSPGKRKCPVGRRRRPRGRMKNHSLRAGRECRRGLEETSDLLSQLQSLLGPHLDKGDFGQLSGPDPPGEVGERAPDGASQSSHEPMEDAAPILSLLASPDPQAKHPQDLASTPSPGPMTTSVSSLSASQPPEPSLPLEHPSPEPPALFPHPPHTPDPLACSLPPPKGFTAPPLRDSTLITPSHCDSVALPLGTVPQSLSPHEDLVASVPAISGLGGSNSHVSASSRWQETARTSCAFNSSVQQDHLSRHPPETCQMEAGSLFLLSSDGQNVVGIQVTETAKVNIWEEKENVGSFTNRMTPEKHLNSLRNLAKSLDAEQDTTNPKPFWNMGENSKQLPGPQKLSDPRLWQESFWKNYSQLFWGLPSLHSESLVANAWVTDRSYTLQSPPFLFNEMSNVCPIQRETTMSPLLFQAQPLSHLGPECQPFISSTPQFRPTPMAQAEAQAHLQSSFPVLSPAFPSLIQNTGVACPASQNKVQALSLPETQHPEWPLLRRQLEGRLALPSRVQKSQDVFSVSTPNLPQESLTSILPENFPVSPELRRQLEQHIKKWIIQHWGNLGRIQESLDLMQLQDESPGTSQAKGKPSPWQSSMSTGESSKEAQKVKFQLERDPCPHLGQILGETPQNLSRDMKSFPRKVLGVTSEELERNLRKPLRSDSGSDLLRCTERTHIENILKAHMGRNLGQTNEGLIPVRVRRSWLAVNQALPVSNTHVKTSNLAAPKSGKACVNTAQVLSFLEPCTQQGLGAHIVRFWAKHRWGLPLRVLKPIQCFKLEKVSSLSLTQLAGPSSATCESGAGSEVEVDMFLRKPPMASLRKQVLTKASDHMPESLLASSPAWKQFQRAPRGIPSWNDHEPLKPPPAGQEGRWPSKPLTYSLTGSTQQSRSLGAQSSKAGETREAVPQCRVPLETCMLANLQATSEDVHGFEAPGTSKSSLHPRVSVSQDPRKLCLMEEVVSEFEPGMATKSETQPQVCAAVVLLPDGQASVVPHASENLVSQVPQGHLQSMPTGNMRASQELHDLMAARRSKLVHEEPRKPNCQGSCKSQRPMFPPIHKSEKFRKPNLEKHEERLEGLRTPQLTPVRKTEDTHQDEGVQLLPSKKQPPSVSPFGENIKQIFQWIFSKKKSKPAPVTAESQKTVKNRSCVYSSSAEAQGLMTAVGQMLDEKMSLCHARHASKVNQHKQKFQAPVCGFPCNHRHLFYSEHGRILSYAASSQQATLKSQGCPNRDRQIRNQQPLKSVRCNNEQWGLRHPQILHPKKAVSPVSPPQHWPKTSGASSHHHHCPRHCLLWEGI.

Residues 23-43 traverse the membrane as a helical segment; it reads PWVLDIFLTLVFALGFFFLLL. 8 disordered regions span residues 55 to 87, 108 to 142, 154 to 235, 373 to 397, 627 to 658, 900 to 955, 1084 to 1161, and 1313 to 1335; these read PSPS…GREC, HLDK…HEPM, SPDP…STLI, EQDT…GPQK, QDES…EAQK, RGIP…REAV, VHEE…PSVS, and KAVS…SHHH. Positions 60–82 are enriched in basic residues; it reads GKRKCPVGRRRRPRGRMKNHSLR. The segment covering 165 to 178 has biased composition (polar residues); sequence LASTPSPGPMTTSV. The span at 198–211 shows a compositional bias: pro residues; the sequence is PEPPALFPHPPHTP. 2 stretches are compositionally biased toward polar residues: residues 627-651 and 927-948; these read QDES…STGE and LTYS…SSKA. Composition is skewed to basic and acidic residues over residues 1108–1127 and 1137–1146; these read HKSE…RLEG and RKTEDTHQDE.

Belongs to the SPATA31 family.

Its subcellular location is the membrane. Functionally, may play a role in spermatogenesis. The polypeptide is Spermatogenesis-associated protein 31A3 (SPATA31A3) (Homo sapiens (Human)).